The following is a 953-amino-acid chain: Homeobox protein LUMINIDEPENDENS (953 aa).

A DNA-binding region (homeobox) is located at residues 63–123 (KIGKRPRDLL…VTQKTRVRKQ (61 aa)). Residues 404–430 (EQPGQKAAGKSPQTVRIGTSGRSRPMS) are disordered. Residues 414–425 (SPQTVRIGTSGR) show a composition bias toward polar residues. 5 repeat units span residues 498-502 (QPVNG), 507-511 (QPVNG), 516-520 (QPVNG), 525-529 (QPVNG), and 534-538 (QPVNG). Residues 498-538 (QPVNGFSTIQPVNGPSAVQPVNGPLAVQPVNGPSALQPVNG) are 5 X 5 AA repeats of Q-P-V-N-G. Disordered stretches follow at residues 606–668 (NSKE…EPQD), 733–763 (APNSSSSSNKQVEERVEVSLPSPTPSTNPGM), and 861–953 (VGQM…KRWR). Positions 608–623 (KEADVQRNRNRRERET) are enriched in basic and acidic residues. A compositionally biased stretch (low complexity) spans 651-661 (PEIPSQQPPEE). Residues 733–742 (APNSSSSSNK) are compositionally biased toward polar residues. Residues 869–884 (SSSWRSQQSQNSYYSH) show a composition bias toward low complexity. Polar residues-rich tracts occupy residues 888–934 (EIAS…QQQA) and 942–953 (THPYWNQNKRWR).

In terms of assembly, interacts with SUF4. In terms of tissue distribution, expressed in shoot apex, root apex, leaf primordia and floral buds.

It is found in the nucleus. Functionally, seems to play a role in the regulation of flowering time in the autonomous flowering pathway by repressing FLOWERING LOCUS C expression. This chain is Homeobox protein LUMINIDEPENDENS (LD), found in Arabidopsis thaliana (Mouse-ear cress).